Consider the following 97-residue polypeptide: NADH-ubiquinone oxidoreductase chain 4L (97 aa).

The next 3 helical transmembrane spans lie at methionine 1 to asparagine 21, leucine 23 to isoleucine 43, and leucine 60 to leucine 80.

It belongs to the complex I subunit 4L family.

It localises to the mitochondrion membrane. It catalyses the reaction a ubiquinone + NADH + 5 H(+)(in) = a ubiquinol + NAD(+) + 4 H(+)(out). Core subunit of the mitochondrial membrane respiratory chain NADH dehydrogenase (Complex I) that is believed to belong to the minimal assembly required for catalysis. Complex I functions in the transfer of electrons from NADH to the respiratory chain. The immediate electron acceptor for the enzyme is believed to be ubiquinone. The polypeptide is NADH-ubiquinone oxidoreductase chain 4L (ND4L) (Paracentrotus lividus (Common sea urchin)).